Here is a 229-residue protein sequence, read N- to C-terminus: Demethylmenaquinone methyltransferase (229 aa).

Residues T58, D78, and 100–101 (DA) each bind S-adenosyl-L-methionine.

The protein belongs to the class I-like SAM-binding methyltransferase superfamily. MenG/UbiE family.

The catalysed reaction is a 2-demethylmenaquinol + S-adenosyl-L-methionine = a menaquinol + S-adenosyl-L-homocysteine + H(+). It participates in quinol/quinone metabolism; menaquinone biosynthesis; menaquinol from 1,4-dihydroxy-2-naphthoate: step 2/2. Methyltransferase required for the conversion of demethylmenaquinol (DMKH2) to menaquinol (MKH2). The chain is Demethylmenaquinone methyltransferase from Thermotoga maritima (strain ATCC 43589 / DSM 3109 / JCM 10099 / NBRC 100826 / MSB8).